The sequence spans 227 residues: ATP-dependent Clp protease proteolytic subunit (227 aa).

S123 serves as the catalytic Nucleophile. H148 is an active-site residue.

It belongs to the peptidase S14 family. Fourteen ClpP subunits assemble into 2 heptameric rings which stack back to back to give a disk-like structure with a central cavity, resembling the structure of eukaryotic proteasomes.

The protein resides in the cytoplasm. It catalyses the reaction Hydrolysis of proteins to small peptides in the presence of ATP and magnesium. alpha-casein is the usual test substrate. In the absence of ATP, only oligopeptides shorter than five residues are hydrolyzed (such as succinyl-Leu-Tyr-|-NHMec, and Leu-Tyr-Leu-|-Tyr-Trp, in which cleavage of the -Tyr-|-Leu- and -Tyr-|-Trp bonds also occurs).. Functionally, cleaves peptides in various proteins in a process that requires ATP hydrolysis. Has a chymotrypsin-like activity. Plays a major role in the degradation of misfolded proteins. This is ATP-dependent Clp protease proteolytic subunit from Chlorobium phaeobacteroides (strain DSM 266 / SMG 266 / 2430).